The following is a 136-amino-acid chain: Holo-[acyl-carrier-protein] synthase (136 aa).

The Mg(2+) site is built by Asp8 and Glu57.

This sequence belongs to the P-Pant transferase superfamily. AcpS family. It depends on Mg(2+) as a cofactor.

The protein resides in the cytoplasm. The enzyme catalyses apo-[ACP] + CoA = holo-[ACP] + adenosine 3',5'-bisphosphate + H(+). Functionally, transfers the 4'-phosphopantetheine moiety from coenzyme A to a Ser of acyl-carrier-protein. The protein is Holo-[acyl-carrier-protein] synthase of Methylorubrum extorquens (strain CM4 / NCIMB 13688) (Methylobacterium extorquens).